Reading from the N-terminus, the 212-residue chain is NADH dehydrogenase [ubiquinone] iron-sulfur protein 8, mitochondrial (212 aa).

A mitochondrion-targeting transit peptide spans 1–36 (MRCLTMPMLLRALAQAQAARAGHASVRGLHSSAVAA). 2 consecutive 4Fe-4S ferredoxin-type domains span residues 104 to 133 (RRYP…IEAE) and 143 to 172 (TRYD…EGPN). [4Fe-4S] cluster contacts are provided by Cys-113, Cys-116, Cys-119, Cys-123, Cys-152, Cys-155, Cys-158, and Cys-162.

Belongs to the complex I 23 kDa subunit family. As to quaternary structure, core subunit of respiratory chain NADH dehydrogenase (Complex I) which is composed of 45 different subunits. This is a component of the iron-sulfur (IP) fragment of the enzyme. Interacts with RAB5IF. Requires [4Fe-4S] cluster as cofactor.

The protein resides in the mitochondrion inner membrane. The catalysed reaction is a ubiquinone + NADH + 5 H(+)(in) = a ubiquinol + NAD(+) + 4 H(+)(out). Functionally, core subunit of the mitochondrial membrane respiratory chain NADH dehydrogenase (Complex I) which catalyzes electron transfer from NADH through the respiratory chain, using ubiquinone as an electron acceptor. Essential for the catalytic activity and assembly of complex I. The polypeptide is NADH dehydrogenase [ubiquinone] iron-sulfur protein 8, mitochondrial (NDUFS8) (Bos taurus (Bovine)).